We begin with the raw amino-acid sequence, 154 residues long: RNA-binding protein PAB1135 (154 aa).

As to quaternary structure, homodimer in solution.

Functionally, in vitro, binds efficiently double-stranded RNAs in a non-sequence specific manner. This Pyrococcus abyssi (strain GE5 / Orsay) protein is RNA-binding protein PAB1135.